Reading from the N-terminus, the 425-residue chain is Serine--tRNA ligase (425 aa).

Residue Thr228–Glu230 participates in L-serine binding. Arg259–Glu261 is an ATP binding site. Glu282 serves as a coordination point for L-serine. Glu346–Ser349 contributes to the ATP binding site. Position 382 (Ser382) interacts with L-serine.

This sequence belongs to the class-II aminoacyl-tRNA synthetase family. Type-1 seryl-tRNA synthetase subfamily. As to quaternary structure, homodimer. The tRNA molecule binds across the dimer.

It is found in the cytoplasm. It carries out the reaction tRNA(Ser) + L-serine + ATP = L-seryl-tRNA(Ser) + AMP + diphosphate + H(+). It catalyses the reaction tRNA(Sec) + L-serine + ATP = L-seryl-tRNA(Sec) + AMP + diphosphate + H(+). It functions in the pathway aminoacyl-tRNA biosynthesis; selenocysteinyl-tRNA(Sec) biosynthesis; L-seryl-tRNA(Sec) from L-serine and tRNA(Sec): step 1/1. Catalyzes the attachment of serine to tRNA(Ser). Is also able to aminoacylate tRNA(Sec) with serine, to form the misacylated tRNA L-seryl-tRNA(Sec), which will be further converted into selenocysteinyl-tRNA(Sec). This is Serine--tRNA ligase from Rickettsia rickettsii (strain Iowa).